The sequence spans 559 residues: Frizzled-5 (559 aa).

Residues 1 to 26 form the signal peptide; the sequence is MGSFRSGVFALSFVVLLLDYFAPAQA. Residues 27-220 are Extracellular-facing; sequence ASKAIVCQEI…QPYFTQDEKM (194 aa). Positions 28 to 149 constitute an FZ domain; the sequence is SKAIVCQEIT…GDPDTLCMYY (122 aa). 5 disulfides stabilise this stretch: C33/C94, C41/C87, C78/C116, C105/C146, and C109/C133. An N-linked (GlcNAc...) asparagine glycan is attached at N47. N-linked (GlcNAc...) asparagine glycosylation occurs at N150. Residues 221 to 241 traverse the membrane as a helical segment; the sequence is FVTFWIGLWSILCFISTFTTV. Topologically, residues 242–257 are cytoplasmic; that stretch reads ATFLIDMERFRYPERP. The chain crosses the membrane as a helical span at residues 258–278; sequence IIFLSACYLFVSIGYVVRLIV. At 279-301 the chain is on the extracellular side; that stretch reads GHENVACNKDHIHYETTGPALCT. The helical transmembrane segment at 302–322 threads the bilayer; sequence IVFLLIYFFGMASSIWWVILT. The Cytoplasmic portion of the chain corresponds to 323-343; that stretch reads FTWFLAAGMKWGNEAIASYSQ. The helical transmembrane segment at 344 to 364 threads the bilayer; it reads YFHMAAWLIPSVKSIAVLALS. Over 365-387 the chain is Extracellular; it reads SVDGDPVAGICYVGNQNLDNLRG. Residues 388–408 traverse the membrane as a helical segment; that stretch reads FVLAPLVVYLFSGTMFLLAGF. The Cytoplasmic segment spans residues 409–434; it reads VSLFRIRSVIKQGGTKTDKLEKLMIR. The helical transmembrane segment at 435 to 455 threads the bilayer; the sequence is IGIFSVLYTVPATIVVACYIY. Topologically, residues 456–483 are extracellular; that stretch reads EQHYREHWEKTHNCSCPGDKQRYRPDYA. N468 carries N-linked (GlcNAc...) asparagine glycosylation. A helical transmembrane segment spans residues 484–504; the sequence is VFMLKYLMCLVVGITSGVWIW. At 505 to 559 the chain is on the cytoplasmic side; sequence SGKTLESWKRFTGRCCRNSKPINASAYSEASRALTPRTGLSNLTLPHKQVPLSHV. Positions 507-512 match the Lys-Thr-X-X-X-Trp motif, mediates interaction with the PDZ domain of Dvl family members motif; it reads KTLESW. A PDZ-binding motif is present at residues 557–559; sequence SHV.

Belongs to the G-protein coupled receptor Fz/Smo family. In terms of tissue distribution, expressed in retina.

It localises to the cell membrane. Its subcellular location is the golgi apparatus membrane. Receptor for Wnt proteins that functions in the canonical Wnt/beta-catenin signaling pathway. The canonical Wnt/beta-catenin signaling pathway leads to the activation of disheveled proteins, inhibition of GSK-3 kinase, nuclear accumulation of beta-catenin and activation of Wnt target genes. A second signaling pathway involving PKC and calcium fluxes has been seen for some family members, but it is not yet clear if it represents a distinct pathway or if it can be integrated in the canonical pathway, as PKC seems to be required for Wnt-mediated inactivation of GSK-3 kinase. Both pathways seem to involve interactions with G-proteins. May be involved in transduction and intercellular transmission of polarity information during tissue morphogenesis and/or in differentiated tissues. The chain is Frizzled-5 (fzd5) from Xenopus laevis (African clawed frog).